A 181-amino-acid chain; its full sequence is Large ribosomal subunit protein uL5 (181 aa).

It belongs to the universal ribosomal protein uL5 family. Part of the 50S ribosomal subunit; part of the 5S rRNA/L5/L18/L25 subcomplex. Contacts the 5S rRNA and the P site tRNA. Forms a bridge to the 30S subunit in the 70S ribosome.

In terms of biological role, this is one of the proteins that bind and probably mediate the attachment of the 5S RNA into the large ribosomal subunit, where it forms part of the central protuberance. In the 70S ribosome it contacts protein S13 of the 30S subunit (bridge B1b), connecting the 2 subunits; this bridge is implicated in subunit movement. Contacts the P site tRNA; the 5S rRNA and some of its associated proteins might help stabilize positioning of ribosome-bound tRNAs. The polypeptide is Large ribosomal subunit protein uL5 (Helicobacter pylori (strain J99 / ATCC 700824) (Campylobacter pylori J99)).